The primary structure comprises 66 residues: MKTSALFVIFGLVLLFCNSFAAELEMTGRGCGGLMAGCDGKSTFCCSGYNCSPTWKWCVYARPGRR.

Residues 1 to 21 (MKTSALFVIFGLVLLFCNSFA) form the signal peptide. The propeptide occupies 22–29 (AELEMTGR). 3 cysteine pairs are disulfide-bonded: Cys-31-Cys-46, Cys-38-Cys-51, and Cys-45-Cys-58. Pro-63 is subject to Proline amide.

This sequence belongs to the neurotoxin 10 (Hwtx-1) family. 46 (Jztx-7/10/12) subfamily. As to expression, expressed by the venom gland.

The protein resides in the secreted. Functionally, probable ion channel inhibitor. This chain is U1-theraphotoxin-Cg1a 2, found in Chilobrachys guangxiensis (Chinese earth tiger tarantula).